The chain runs to 419 residues: Histidine--tRNA ligase (419 aa).

The protein belongs to the class-II aminoacyl-tRNA synthetase family. As to quaternary structure, homodimer.

It is found in the cytoplasm. The catalysed reaction is tRNA(His) + L-histidine + ATP = L-histidyl-tRNA(His) + AMP + diphosphate + H(+). In Trichlorobacter lovleyi (strain ATCC BAA-1151 / DSM 17278 / SZ) (Geobacter lovleyi), this protein is Histidine--tRNA ligase.